The chain runs to 222 residues: UPF0758 protein TM_1557 (222 aa).

In terms of domain architecture, MPN spans 101 to 222 (KLDSSVKVYK…YFSFREEGEL (122 aa)). His-171, His-173, and Asp-184 together coordinate Zn(2+). Residues 171–184 (HNHPSGDPTPSKED) carry the JAMM motif motif.

This sequence belongs to the UPF0758 family.

This is UPF0758 protein TM_1557 from Thermotoga maritima (strain ATCC 43589 / DSM 3109 / JCM 10099 / NBRC 100826 / MSB8).